A 136-amino-acid chain; its full sequence is Mite allergen Der f 21.0101 (136 aa).

The first 17 residues, M1–G17, serve as a signal peptide directing secretion.

It belongs to the mite group 5 allergen family. Monomer. Homodimer. In terms of tissue distribution, highly expressed in foregut (stomach), midgut and hindgut. Not expressed in body wall, reproductive system or body cavity.

This Dermatophagoides farinae (American house dust mite) protein is Mite allergen Der f 21.0101.